Consider the following 619-residue polypeptide: MMQVLLVTISLAVFPYQGSSIILESGNVNDYEVVYPQKVTALPKGAVQQPEQKYEDTMQYEFEVNGEPVVLHLEKNKILFSEDYSETHYYPDGREITTNPPVEDHCYYHGRIQNDAHSSASISACNGLKGHFKLRGEMYFIEPLKLSNSEAHAVYKYENIEKEDEIPKMCGVTQTNWESDKPIKKASQLVSTSAQFNKIFIELVIIVDHSMAKKCNSTATNTKIYEIVNSANEIFNPLNIHVTLIGVEFWCDRDLINVTSSADETLNSFGEWRASDLMTRKSHDNALLFTDMRFDLNTLGITFLAGMCQAYRSVEIVQEQGNRNFKTAVIMAHELSHNLGMYHDGKNCICNDSSCVMSPVLSDQPSKLFSNCSIHDYQRYLTRYKPKCIFNPPLRKDIVSPPVCGNEIWEEGEECDCGSPANCQNPCCDAATCKLKPGAECGNGLCCYQCKIKTAGTVCRRARDECDVPEHCTGQSAECPRDQLQQNGKPCQNNRGYCYNGDCPIMRNQCISLFGSRANVAKDSCFQENLKGSYYGYCRKENGRKIPCAPQDVKCGRLFCLNNSPRNKNPCNMHYSCMDQHKGMVDPGTKCEDGKVCNNKRQCVDVNTAYQSTTGFSQI.

Positions 1–20 (MMQVLLVTISLAVFPYQGSS) are cleaved as a signal peptide. Residues 21 to 188 (IILESGNVND…SDKPIKKASQ (168 aa)) constitute a propeptide that is removed on maturation. The Peptidase M12B domain occupies 199 to 393 (IFIELVIIVD…YKPKCIFNPP (195 aa)). Cys-215 and Cys-251 form a disulfide bridge. Residues Asn-216 and Asn-257 are each glycosylated (N-linked (GlcNAc...) (complex) asparagine). Intrachain disulfides connect Cys-308–Cys-388, Cys-348–Cys-372, and Cys-350–Cys-355. A Zn(2+)-binding site is contributed by His-333. Glu-334 is a catalytic residue. Zn(2+) is bound by residues His-337 and His-343. N-linked (GlcNAc...) (complex) asparagine glycosylation is found at Asn-351 and Asn-371. The Disintegrin domain maps to 401-487 (PPVCGNEIWE…ECPRDQLQQN (87 aa)). Residues Val-403, Asn-406, Ile-408, Glu-410, Glu-413, and Asp-416 each contribute to the Ca(2+) site. 14 cysteine pairs are disulfide-bonded: Cys-404–Cys-433, Cys-415–Cys-428, Cys-417–Cys-423, Cys-427–Cys-450, Cys-441–Cys-447, Cys-446–Cys-472, Cys-459–Cys-479, Cys-466–Cys-498, Cys-491–Cys-503, Cys-510–Cys-560, Cys-525–Cys-571, Cys-538–Cys-548, Cys-555–Cys-597, and Cys-591–Cys-603. Positions 465 to 467 (ECD) match the D/ECD-tripeptide motif. Asp-467, Val-468, Glu-470, Asp-482, and Gln-483 together coordinate Ca(2+).

It belongs to the venom metalloproteinase (M12B) family. P-III subfamily. P-IIId sub-subfamily. In terms of assembly, heterotrimer; disulfide-linked. The heterotrimer consists of 1 heavy chain and 2 light chains (lectins): LC1 and LC2. It depends on Zn(2+) as a cofactor. N-glycosylated; probably required for conformation. Removal of easily accessible sugars does not change its functional capacity, but removal of the core sugars with N-glycanase causes a virtually complete loss of enzyme activity, apparently as a result of major conformational changes in the molecule. Not O-glycosylated. As to expression, expressed by the venom gland.

It localises to the secreted. The catalysed reaction is Specifically activates several components of the blood clotting system, including coagulation factor X, coagulation factor IX and protein C by cleavage of Arg-|-Xaa bonds. Has no action on insulin B chain.. Catalytic subunit of blood coagulation factor X-activating enzyme. Activates coagulation factor X (F10) by cleaving the Arg-Ile bond and is also able to activate coagulation factor IX (F9) and protein S (PROS1) by specific cleavage of Arg-Ile and Arg-Val bonds. The protein is Coagulation factor X-activating enzyme heavy chain of Daboia siamensis (Eastern Russel's viper).